A 644-amino-acid chain; its full sequence is Tubulin--tyrosine ligase-like protein 12 (644 aa).

The segment covering 1-13 (MEAERGPERRPAE) has biased composition (basic and acidic residues). The segment at 1-25 (MEAERGPERRPAERSSPGQTPEEGA) is disordered. The TTL domain maps to 300–644 (PHGHIFKVYT…PGGCHVTCLV (345 aa)). ATP contacts are provided by residues 450–453 (SKYI), Lys468, and Asp470.

Belongs to the tubulin--tyrosine ligase family. Interacts with MAVS; the interaction prevents MAVS binding to TBK1 and IKBKE. Interacts (via N-terminus) with TBK1 (via protein kinase domain). Interacts (via TTL domain) with IKBKE (via protein kinase domain). Interacts with tubulin alpha. Interacts with histone H3 and histone H4 (when trimethylated at 'Lys-20' (H4K20me3)). Interacts with CBX3. As to expression, expressed in the basal layer of prostate and endothelial cells. Increased expression in prostatic intraepithelial neoplasia and metastatic lesions.

It is found in the cytoplasm. The protein localises to the midbody. It localises to the cytoskeleton. The protein resides in the microtubule organizing center. Its subcellular location is the centrosome. It is found in the spindle. The protein localises to the nucleus. Its function is as follows. Negatively regulates post-translational modifications of tubulin, including detyrosination of the C-terminus and polyglutamylation of glutamate residues. Also, indirectly promotes histone H4 trimethylation at 'Lys-20' (H4K20me3). Probably by controlling tubulin and/or histone H4 post-translational modifications, plays a role in mitosis and in maintaining chromosome number stability. During RNA virus-mediated infection, acts as a negative regulator of the RIG-I pathway by preventing MAVS binding to TBK1 and IKBKE. The polypeptide is Tubulin--tyrosine ligase-like protein 12 (TTLL12) (Homo sapiens (Human)).